The primary structure comprises 560 residues: Alpha-keto-acid decarboxylase (560 aa).

E61 provides a ligand contact to thiamine diphosphate. The segment at 396–478 (TSFYGMADHR…VVVNNDGYTV (83 aa)) is thiamine pyrophosphate binding. Mg(2+) contacts are provided by D446, N473, and G475.

This sequence belongs to the TPP enzyme family. Requires a metal cation as cofactor. It depends on thiamine diphosphate as a cofactor.

Decarboxylates branched-chain and aromatic alpha-keto acids to aldehydes. In Mycobacterium bovis (strain ATCC BAA-935 / AF2122/97), this protein is Alpha-keto-acid decarboxylase (kdc).